We begin with the raw amino-acid sequence, 346 residues long: Methylthioribose-1-phosphate isomerase (346 aa).

Substrate contacts are provided by residues 47–49, Arg88, and Gln195; that span reads RGA. Asp236 (proton donor) is an active-site residue. 246–247 lines the substrate pocket; the sequence is NK.

The protein belongs to the eIF-2B alpha/beta/delta subunits family. MtnA subfamily.

It carries out the reaction 5-(methylsulfanyl)-alpha-D-ribose 1-phosphate = 5-(methylsulfanyl)-D-ribulose 1-phosphate. The protein operates within amino-acid biosynthesis; L-methionine biosynthesis via salvage pathway; L-methionine from S-methyl-5-thio-alpha-D-ribose 1-phosphate: step 1/6. Functionally, catalyzes the interconversion of methylthioribose-1-phosphate (MTR-1-P) into methylthioribulose-1-phosphate (MTRu-1-P). This Maridesulfovibrio salexigens (strain ATCC 14822 / DSM 2638 / NCIMB 8403 / VKM B-1763) (Desulfovibrio salexigens) protein is Methylthioribose-1-phosphate isomerase.